We begin with the raw amino-acid sequence, 1181 residues long: Integrin alpha-2 (1181 aa).

Residues 1–29 (MGPERTGAAPLPLLLVLALSQGILNCCLA) form the signal peptide. Over 30–1132 (YNVGLPEAKI…KPDEKAEVPT (1103 aa)) the chain is Extracellular. 2 FG-GAP repeats span residues 34-92 (LPEA…TATC) and 101-161 (TSIP…LSAS). Cysteine 83 and cysteine 92 are disulfide-bonded. Asparagine 105, asparagine 112, and asparagine 343 each carry an N-linked (GlcNAc...) asparagine glycan. One can recognise a VWFA domain in the interval 188–365 (WDAVKNFLEK…TLGEQIFSIE (178 aa)). 5 FG-GAP repeats span residues 366–420 (GTVQ…LIFP), 423–475 (AFDQ…ENGN), 477–539 (TVIQ…ILGQ), 540–598 (HQFL…TIRT), and 602–664 (QKIL…FTPE). 3 N-linked (GlcNAc...) asparagine glycosylation sites follow: asparagine 432, asparagine 460, and asparagine 475. Ca(2+) is bound by residues aspartate 499, aspartate 501, aspartate 503, aspartate 507, aspartate 563, asparagine 565, aspartate 567, aspartate 571, aspartate 627, asparagine 629, aspartate 631, and aspartate 635. 5 cysteine pairs are disulfide-bonded: cysteine 680–cysteine 737, cysteine 789–cysteine 795, cysteine 865–cysteine 876, cysteine 1019–cysteine 1050, and cysteine 1055–cysteine 1060. N-linked (GlcNAc...) asparagine glycosylation occurs at asparagine 699. Residues asparagine 1057, asparagine 1074, and asparagine 1081 are each glycosylated (N-linked (GlcNAc...) asparagine). The chain crosses the membrane as a helical span at residues 1133-1154 (GVIIGSIIAGILLLLALVAILW). The interval 1155–1161 (KLGFFKR) is interaction with HPS5. The Cytoplasmic portion of the chain corresponds to 1155-1181 (KLGFFKRKYEKMTKNPDEIDETTELSS). The GFFKR motif motif lies at 1157–1161 (GFFKR).

Belongs to the integrin alpha chain family. Heterodimer of an alpha and a beta subunit. Alpha-2 associates with beta-1. Interacts with HPS5 and RAB21. In terms of assembly, (Microbial infection) Integrin ITGA2:ITGB1 interacts (via ITAG2 I-domain) with rotavirus A VP4 protein. As to quaternary structure, (Microbial infection) Integrin ITGA2:ITGB1 interacts with human echoviruses 1 and 8 capsid proteins.

It is found in the membrane. In terms of biological role, integrin alpha-2/beta-1 is a receptor for laminin, collagen, collagen C-propeptides, fibronectin and E-cadherin. It recognizes the proline-hydroxylated sequence G-F-P-G-E-R in collagen. It is responsible for adhesion of platelets and other cells to collagens, modulation of collagen and collagenase gene expression, force generation and organization of newly synthesized extracellular matrix. (Microbial infection) Integrin ITGA2:ITGB1 acts as a receptor for Human rotavirus A. Functionally, (Microbial infection) Integrin ITGA2:ITGB1 acts as a receptor for Human echoviruses 1 and 8. The protein is Integrin alpha-2 (ITGA2) of Homo sapiens (Human).